A 202-amino-acid polypeptide reads, in one-letter code: Pyridoxal 5'-phosphate synthase subunit PdxT (202 aa).

L-glutamine is bound at residue 49 to 51 (GES). The Nucleophile role is filled by cysteine 81. L-glutamine is bound by residues arginine 110 and 139–140 (IR). Catalysis depends on charge relay system residues histidine 182 and glutamate 184.

Belongs to the glutaminase PdxT/SNO family. In terms of assembly, in the presence of PdxS, forms a dodecamer of heterodimers. Only shows activity in the heterodimer.

It catalyses the reaction aldehydo-D-ribose 5-phosphate + D-glyceraldehyde 3-phosphate + L-glutamine = pyridoxal 5'-phosphate + L-glutamate + phosphate + 3 H2O + H(+). The catalysed reaction is L-glutamine + H2O = L-glutamate + NH4(+). The protein operates within cofactor biosynthesis; pyridoxal 5'-phosphate biosynthesis. Functionally, catalyzes the hydrolysis of glutamine to glutamate and ammonia as part of the biosynthesis of pyridoxal 5'-phosphate. The resulting ammonia molecule is channeled to the active site of PdxS. In Rhodococcus jostii (strain RHA1), this protein is Pyridoxal 5'-phosphate synthase subunit PdxT.